Here is a 418-residue protein sequence, read N- to C-terminus: Adenylosuccinate synthetase (418 aa).

Residues 12–18 (GDEGKGK) and 40–42 (GHT) each bind GTP. Catalysis depends on D13, which acts as the Proton acceptor. The Mg(2+) site is built by D13 and G40. IMP-binding positions include 13-16 (DEGK), 38-41 (NAGH), T128, R142, Q221, T236, and R299. H41 acts as the Proton donor in catalysis. A substrate-binding site is contributed by 295 to 301 (ATTGRNR). GTP contacts are provided by residues R301, 327-329 (KAD), and 399-401 (SYG).

It belongs to the adenylosuccinate synthetase family. In terms of assembly, homodimer. Mg(2+) serves as cofactor.

Its subcellular location is the cytoplasm. It catalyses the reaction IMP + L-aspartate + GTP = N(6)-(1,2-dicarboxyethyl)-AMP + GDP + phosphate + 2 H(+). Its pathway is purine metabolism; AMP biosynthesis via de novo pathway; AMP from IMP: step 1/2. In terms of biological role, plays an important role in the de novo pathway of purine nucleotide biosynthesis. Catalyzes the first committed step in the biosynthesis of AMP from IMP. This is Adenylosuccinate synthetase from Finegoldia magna (strain ATCC 29328 / DSM 20472 / WAL 2508) (Peptostreptococcus magnus).